A 341-amino-acid chain; its full sequence is Mitochondrial ubiquitin ligase activator of nfkb 1-A (341 aa).

Residues 1 to 5 are Cytoplasmic-facing; the sequence is MEDFP. A helical transmembrane segment spans residues 6 to 26; that stretch reads VLEMVCLGSSVALSGLFYYIY. At 27-233 the chain is on the mitochondrial intermembrane side; the sequence is RKKRKTVDKL…LLMEQEGQAE (207 aa). Residues 234–254 traverse the membrane as a helical segment; the sequence is VWRVFACICALAGVAVLIWTG. The Cytoplasmic portion of the chain corresponds to 255–341; the sequence is RRYYRQLKLR…IKRVVPLYQA (87 aa). An RING-type zinc finger spans residues 292 to 329; it reads CVICLSNPRGCVLLDCGHVCCCFRCYQALPQPFCPICR.

As to quaternary structure, homooligomer.

Its subcellular location is the mitochondrion outer membrane. It catalyses the reaction S-ubiquitinyl-[E2 ubiquitin-conjugating enzyme]-L-cysteine + [acceptor protein]-L-lysine = [E2 ubiquitin-conjugating enzyme]-L-cysteine + N(6)-ubiquitinyl-[acceptor protein]-L-lysine.. Its pathway is protein modification; protein ubiquitination. Functionally, E3 ubiquitin-protein ligase that plays a role in the control of mitochondrial morphology. Promotes mitochondrial fragmentation and influences mitochondrial localization. Inhibits cell growth. E3 ubiquitin ligases accept ubiquitin from an E2 ubiquitin-conjugating enzyme in the form of a thioester and then directly transfer the ubiquitin to targeted substrates. This Danio rerio (Zebrafish) protein is Mitochondrial ubiquitin ligase activator of nfkb 1-A (mul1a).